The chain runs to 448 residues: Deoxyguanosinetriphosphate triphosphohydrolase-like protein (448 aa).

In terms of domain architecture, HD spans 67–260; it reads RLTHSLEVSQ…MELADDIAYG (194 aa).

This sequence belongs to the dGTPase family. Type 2 subfamily.

This chain is Deoxyguanosinetriphosphate triphosphohydrolase-like protein, found in Aliivibrio fischeri (strain ATCC 700601 / ES114) (Vibrio fischeri).